The sequence spans 196 residues: Ribosome maturation factor RimP (196 aa).

Residues 164-196 (LAPQKPNKPGPKKTGHEKKKPSNESAAGKPRAE) form a disordered region. Positions 173–182 (GPKKTGHEKK) are enriched in basic residues.

This sequence belongs to the RimP family.

It localises to the cytoplasm. Functionally, required for maturation of 30S ribosomal subunits. The chain is Ribosome maturation factor RimP from Xanthomonas oryzae pv. oryzae (strain MAFF 311018).